The sequence spans 196 residues: ATP-dependent Clp protease proteolytic subunit (196 aa).

S101 acts as the Nucleophile in catalysis. H126 is an active-site residue.

Belongs to the peptidase S14 family. Component of the chloroplastic Clp protease core complex.

Its subcellular location is the plastid. The protein localises to the chloroplast stroma. The enzyme catalyses Hydrolysis of proteins to small peptides in the presence of ATP and magnesium. alpha-casein is the usual test substrate. In the absence of ATP, only oligopeptides shorter than five residues are hydrolyzed (such as succinyl-Leu-Tyr-|-NHMec, and Leu-Tyr-Leu-|-Tyr-Trp, in which cleavage of the -Tyr-|-Leu- and -Tyr-|-Trp bonds also occurs).. Its function is as follows. Cleaves peptides in various proteins in a process that requires ATP hydrolysis. Has a chymotrypsin-like activity. Plays a major role in the degradation of misfolded proteins. This is ATP-dependent Clp protease proteolytic subunit from Gossypium hirsutum (Upland cotton).